The sequence spans 273 residues: HTH-type transcriptional activator RhaS (273 aa).

The 99-residue stretch at 174-272 folds into the HTH araC/xylS-type domain; sequence YQLLDWLQNN…SQSPRDLRSQ (99 aa). 2 DNA-binding regions (H-T-H motif) span residues 191-212 and 239-262; these read PELA…KNKT and VTDI…KREF.

Binds DNA as a dimer.

It is found in the cytoplasm. Activates expression of the rhaBAD and rhaT operons. This chain is HTH-type transcriptional activator RhaS, found in Yersinia pseudotuberculosis serotype O:1b (strain IP 31758).